The chain runs to 377 residues: Nitric oxide reductase FlRd-NAD(+) reductase (377 aa).

Belongs to the FAD-dependent oxidoreductase family. FAD serves as cofactor.

It is found in the cytoplasm. The enzyme catalyses 2 reduced [nitric oxide reductase rubredoxin domain] + NAD(+) + H(+) = 2 oxidized [nitric oxide reductase rubredoxin domain] + NADH. It participates in nitrogen metabolism; nitric oxide reduction. One of at least two accessory proteins for anaerobic nitric oxide (NO) reductase. Reduces the rubredoxin moiety of NO reductase. This is Nitric oxide reductase FlRd-NAD(+) reductase from Escherichia coli (strain 55989 / EAEC).